The sequence spans 206 residues: Small ribosomal subunit protein uS4 (206 aa).

In terms of domain architecture, S4 RNA-binding spans glycine 96–lysine 156.

The protein belongs to the universal ribosomal protein uS4 family. As to quaternary structure, part of the 30S ribosomal subunit. Contacts protein S5. The interaction surface between S4 and S5 is involved in control of translational fidelity.

In terms of biological role, one of the primary rRNA binding proteins, it binds directly to 16S rRNA where it nucleates assembly of the body of the 30S subunit. Its function is as follows. With S5 and S12 plays an important role in translational accuracy. The protein is Small ribosomal subunit protein uS4 of Photorhabdus laumondii subsp. laumondii (strain DSM 15139 / CIP 105565 / TT01) (Photorhabdus luminescens subsp. laumondii).